We begin with the raw amino-acid sequence, 156 residues long: MPRRRVAAKREVLDDPKYGSQILAKFMNHVMESGKKAVAERIVYGALEKVKERKNSDPLEIFEKALDAIAPLVEVKSRRVGGATYQVPVEVRPSRRNALAMRWLVDFARKRGEKSMALRLAGELLDAAEGKGAAVKKREDVHRMAEANKAFSHYRF.

Belongs to the universal ribosomal protein uS7 family. Part of the 30S ribosomal subunit. Contacts proteins S9 and S11.

Its function is as follows. One of the primary rRNA binding proteins, it binds directly to 16S rRNA where it nucleates assembly of the head domain of the 30S subunit. Is located at the subunit interface close to the decoding center, probably blocks exit of the E-site tRNA. This Pseudomonas fluorescens (strain SBW25) protein is Small ribosomal subunit protein uS7.